Here is a 549-residue protein sequence, read N- to C-terminus: Undecaprenyl phosphate-alpha-4-amino-4-deoxy-L-arabinose arabinosyl transferase (549 aa).

Transmembrane regions (helical) follow at residues 9 to 29 (LLLI…GLWI), 80 to 100 (LFGV…LAYL), 112 to 132 (SLAC…SGYA), 136 to 156 (PQFT…LDAG), 166 to 186 (ILLG…AWLL), 204 to 224 (LLGY…PWAL), 256 to 276 (PWWF…GLLP), 288 to 308 (QAPV…FSLS), 312 to 332 (LPTY…HALV), 346 to 366 (NGLL…YLQL), 376 to 396 (FELF…LAQW), and 402 to 422 (AWAA…AAMP).

The protein belongs to the glycosyltransferase 83 family.

The protein resides in the cell inner membrane. It carries out the reaction 4-amino-4-deoxy-alpha-L-arabinopyranosyl di-trans,octa-cis-undecaprenyl phosphate + lipid IVA = lipid IIA + di-trans,octa-cis-undecaprenyl phosphate.. Its pathway is lipopolysaccharide metabolism; 4-amino-4-deoxy-beta-L-arabinose-lipid A biosynthesis. Functionally, catalyzes the transfer of the L-Ara4N moiety of the glycolipid undecaprenyl phosphate-alpha-L-Ara4N to lipid A. The modified arabinose is attached to lipid A and is required for resistance to polymyxin and cationic antimicrobial peptides. This is Undecaprenyl phosphate-alpha-4-amino-4-deoxy-L-arabinose arabinosyl transferase from Pseudomonas aeruginosa (strain UCBPP-PA14).